Consider the following 776-residue polypeptide: MTISPPERGEKAKPIYDQPVDRDHVPADFEKFEQPGFFSKSLAKGPNSTTWIWNLHADAHDFDTHIGDLEETSRKIFSAHFGHLAIVFIWMSGAFFHGARFSNYSGWLADPTHVKASAQVVWPIVGQEIMNADMGAGFNGIQITSGIFQMWRAWGITSETELMALATGALIMAALVLHGGIFHYHKAAPKLEWFKKIESMLQHHQIGLFGLGSLGWTGHLIHVANPTNALLDAIDAGTPMVLDGKTIATAADIPLPHELYNADLVGQIYPGLASGVGNFFSANWWAFSDFLTNNGGVNPVTGALWSTDVAHHHLAWAVFLMFGGHVYRSRFGIGHSMKEIMGNVKGDPLLFPAPNGHKGLFEFLSNSWHAQLAVNLACIGSGSIVVAHHMYSLPPYPYLATDYPTVLGLFTHHMWIGGLMICGAAAHAGIAVIRDYDVSVHVDNVLDRMFKARDAIISHLNWVCMFLGFHSFGLYIHNDSMRALGRSQDMFSDSAIQLQPVLAQWIQSLWASSIGTSAVVGTTTGLPGAVSDVFNGSVVAVGGKVALMAIPLGTADLMIHHIHAFTIHVTCLILLKGVLFARSSRLVPDKANLGFRFSCDGPGRGGTCQVSSWDHVFLGLFWMYNSLSMVIFYFSWKMQSDVWGTVNSDGSVTHLVSGNFAQSAITVNGWFRDFLWAQSSQVLTSYGTGLSGYGLLFLGGHFVWAFSLMFLFSGRGYWQELFESIIWAHNKLKLAPTIQPRALSITQGRAVGVTHFLFGGIVTTWAFFHARLLGLG.

The next 8 membrane-spanning stretches (helical) occupy residues 76-99 (IFSA…FHGA), 162-185 (LMAL…FHYH), 201-225 (LQHH…HVAN), 309-327 (VAHH…GHVY), 368-391 (WHAQ…HHMY), 407-433 (LGLF…IAVI), 455-477 (AIIS…LYIH), and 557-575 (LMIH…LILL). [4Fe-4S] cluster is bound by residues Cys599 and Cys608. 2 consecutive transmembrane segments (helical) span residues 615–636 (HVFL…YFSW) and 690–712 (LSGY…MFLF). His701 contributes to the divinylchlorophyll a' binding site. Divinyl chlorophyll a contacts are provided by Met709 and Tyr717. A phylloquinone-binding site is contributed by Trp718. The helical transmembrane segment at 750-770 (AVGVTHFLFGGIVTTWAFFHA) threads the bilayer.

The protein belongs to the PsaA/PsaB family. As to quaternary structure, the PsaA/B heterodimer binds the P700 chlorophyll special pair and subsequent electron acceptors. PSI consists of a core antenna complex that captures photons, and an electron transfer chain that converts photonic excitation into a charge separation. The cyanobacterial PSI reaction center is composed of one copy each of PsaA,B,C,D,E,F,I,J,K,L,M and X, and forms trimeric complexes. It depends on PSI electron transfer chain: 5 divinyl chlorophyll a, 1 divinyl chlorophyll a', 2 phylloquinones and 3 4Fe-4S clusters. PSI core antenna: 90 divinyl chlorophyll a, 22 carotenoids, 3 phospholipids and 1 galactolipid. P700 is a divinyl chlorophyll a/divinyl chlorophyll a' dimer, A0 is one or more chlorophyll divinyl a, A1 is one or both phylloquinones and FX is a shared 4Fe-4S iron-sulfur center. as a cofactor.

The protein localises to the cellular thylakoid membrane. The catalysed reaction is reduced [plastocyanin] + hnu + oxidized [2Fe-2S]-[ferredoxin] = oxidized [plastocyanin] + reduced [2Fe-2S]-[ferredoxin]. Its function is as follows. PsaA and PsaB bind P700, the primary electron donor of photosystem I (PSI), as well as the electron acceptors A0, A1 and FX. PSI is a plastocyanin/cytochrome c6-ferredoxin oxidoreductase, converting photonic excitation into a charge separation, which transfers an electron from the donor P700 chlorophyll pair to the spectroscopically characterized acceptors A0, A1, FX, FA and FB in turn. Oxidized P700 is reduced on the lumenal side of the thylakoid membrane by plastocyanin or cytochrome c6. The polypeptide is Photosystem I P700 chlorophyll a apoprotein A1 (Prochlorococcus marinus (strain MIT 9313)).